Reading from the N-terminus, the 552-residue chain is Urocanate hydratase (552 aa).

NAD(+) contacts are provided by residues 49-50, Gln-127, 173-175, Asp-193, 239-240, 260-264, 270-271, and Tyr-319; these read GG, GMG, NA, QTSAH, and YI. Residue Cys-407 is part of the active site. Gly-489 contributes to the NAD(+) binding site.

The protein belongs to the urocanase family. NAD(+) serves as cofactor.

The protein localises to the cytoplasm. It carries out the reaction 4-imidazolone-5-propanoate = trans-urocanate + H2O. The protein operates within amino-acid degradation; L-histidine degradation into L-glutamate; N-formimidoyl-L-glutamate from L-histidine: step 2/3. Its function is as follows. Catalyzes the conversion of urocanate to 4-imidazolone-5-propionate. The protein is Urocanate hydratase of Bacillus cereus (strain ATCC 10987 / NRS 248).